Reading from the N-terminus, the 305-residue chain is MSKKLTFQEIILTLQQFWNEQGCLLMQAYDTEKGAGTMSPYTFLRAIGPEPWNAAYVEPSRRPADGRYGENPNRLYQHHQFQVVMKPSPSNIQELYLESLERLGINPLEHDIRFVEDNWENPSTGSAGLGWEVWLDGMEITQFTYFQQVGGLATGPVTSEVTYSLERLASYIQEVDSVYDIEWADGVKYGEIFIQPEYEHSKYSFEVSDQDMLLENFTKFEKEAERALEEGLVHPAFDYVLKCSHTFNLLDARGAVSVTERAGYIARIRNLARVVAKTFVAERKKLGFPLLDEATRAELLKEDAE.

It belongs to the class-II aminoacyl-tRNA synthetase family. As to quaternary structure, tetramer of two alpha and two beta subunits.

It localises to the cytoplasm. The catalysed reaction is tRNA(Gly) + glycine + ATP = glycyl-tRNA(Gly) + AMP + diphosphate. This Streptococcus suis (strain 05ZYH33) protein is Glycine--tRNA ligase alpha subunit.